We begin with the raw amino-acid sequence, 831 residues long: AdoMet-dependent rRNA methyltransferase SPB1 (831 aa).

S-adenosyl-L-methionine contacts are provided by Gly58, Trp60, Asp78, Asp94, and Asp119. Lys159 serves as the catalytic Proton acceptor. Coiled coils occupy residues 346 to 389 (LTED…QMNM) and 440 to 479 (NDIN…ERDA). Disordered regions lie at residues 492-535 (DEGW…ADQR) and 565-645 (MNKK…DQQS). A compositionally biased stretch (basic and acidic residues) spans 499–510 (ESDKEGSDKETE). Composition is skewed to acidic residues over residues 511–526 (ANDY…DDDE), 594–611 (MEVD…DSDF), and 618–631 (PDEE…DNEN). Basic and acidic residues predominate over residues 632–645 (DVSRKYSKAKDQQS). The stretch at 729 to 782 (LEAQGRKKLRALKRLEKLKKKSDMINEDSAKSERDKADEIQKLMKKLTKKQKTK) forms a coiled coil.

The protein belongs to the class I-like SAM-binding methyltransferase superfamily. RNA methyltransferase RlmE family. SPB1 subfamily. In terms of assembly, component of the nucleolar and nucleoplasmic pre-60S ribosomal particle.

It is found in the nucleus. It localises to the nucleolus. The catalysed reaction is a ribonucleotide in rRNA + S-adenosyl-L-methionine = a 2'-O-methylribonucleotide in rRNA + S-adenosyl-L-homocysteine + H(+). In terms of biological role, required for proper assembly of pre-ribosomal particles during the biogenesis of the 60S ribosomal subunit. This is AdoMet-dependent rRNA methyltransferase SPB1 from Debaryomyces hansenii (strain ATCC 36239 / CBS 767 / BCRC 21394 / JCM 1990 / NBRC 0083 / IGC 2968) (Yeast).